The chain runs to 503 residues: MFGDRQRPMVLVLGLGESGLAIARWCARHGCRLRIADTREAPPNLAALQAEGIDAEFVGGAFTPALLDGGVEIVGLSPGLSPLEPALAALVAAANERGVAVWGELEFFAQALRALGTSGYQPKVLAITGTNGKTTTTSLTGLLCQRSGKKVAVAGNISPAMLDRLASAIDETALPDVWVLELSSFQLETARTFAPDAAAILNITQDHLDWHGSFDAYAQAKGRIFGATTTRVLNRDDAAVMKFAPAVAAADAPRTVTFGLNEPTQDGDYGLSRDNGIAWLVEAVDRDAPDEATTTRRRKRDAAHTPDIAQKRLMPADALRIRGLHNAANALAAFALARAIDLPAAPLLHALREYRGEAHRVEVIATIDDVDYVDDSKGTNVGATVAALDGLAQKIVLIAGGDGKGQDFAPLVAPVARWCRAVMLIGRDAPVIRDTLAETGVPLADHATLEAAVHAAAELAEPGDAVLLSPACASLDMFRNYAHRAEVFRAAVDAIAIDKGATP.

129-135 contributes to the ATP binding site; that stretch reads GTNGKTT.

Belongs to the MurCDEF family.

It localises to the cytoplasm. It catalyses the reaction UDP-N-acetyl-alpha-D-muramoyl-L-alanine + D-glutamate + ATP = UDP-N-acetyl-alpha-D-muramoyl-L-alanyl-D-glutamate + ADP + phosphate + H(+). It functions in the pathway cell wall biogenesis; peptidoglycan biosynthesis. In terms of biological role, cell wall formation. Catalyzes the addition of glutamate to the nucleotide precursor UDP-N-acetylmuramoyl-L-alanine (UMA). The sequence is that of UDP-N-acetylmuramoylalanine--D-glutamate ligase from Burkholderia cenocepacia (strain HI2424).